Here is a 579-residue protein sequence, read N- to C-terminus: Potassium-transporting ATPase potassium-binding subunit (579 aa).

The next 10 helical transmembrane spans lie at 2-22 (MNLV…AIPL), 66-86 (SFSV…LHIF), 135-155 (GLTV…FALI), 177-197 (VLYI…SQGV), 260-280 (TILS…ALCF), 292-312 (GIAI…IVGV), 391-411 (VFGG…LAVF), 437-457 (VLVC…ASIL), 490-510 (FAGF…SMIF), and 546-566 (FIGL…FPAL).

The protein belongs to the KdpA family. As to quaternary structure, the system is composed of three essential subunits: KdpA, KdpB and KdpC.

Its subcellular location is the cell membrane. Part of the high-affinity ATP-driven potassium transport (or Kdp) system, which catalyzes the hydrolysis of ATP coupled with the electrogenic transport of potassium into the cytoplasm. This subunit binds the extracellular potassium ions and delivers the ions to the membrane domain of KdpB through an intramembrane tunnel. This is Potassium-transporting ATPase potassium-binding subunit from Clostridium botulinum (strain Eklund 17B / Type B).